We begin with the raw amino-acid sequence, 440 residues long: Golgi reassembly-stacking protein 1 (440 aa).

G2 is lipidated: N-myristoyl glycine. PDZ GRASP-type domains follow at residues 15–105 (EGFH…FCSF) and 111–199 (QVWH…YGYL). The segment at 15-215 (EGFHLHGVQE…PPSYHKKPPG (201 aa)) is GRASP. Zn(2+)-binding residues include H18, H20, and C103. The interval 190–202 (LGCGIGYGYLHRI) is essential for interaction with GOLGA2/GM130. 3 disordered regions span residues 205-248 (QPPS…ETGS), 261-301 (PGSS…PVQR), and 327-440 (LPSS…STTE). The span at 214 to 239 (PGTPPPSALPLGAPPPDALPPGPTPE) shows a compositional bias: pro residues. Residue T216 is modified to Phosphothreonine. Residues 327–336 (LPSSTELTTT) are compositionally biased toward low complexity. Over residues 337-351 (AVSTSGPEDICSSSS) the composition is skewed to polar residues. 3 positions are modified to phosphoserine: S362, S364, and S373.

It belongs to the GORASP family. Homodimer. Forms higher-order oligomers under interphase but not mitotic conditions. Dimers of the protein on one membrane might be able to interact with dimers on another and so stack cisternae. Interacts with the C-terminus of GOLGA2/GM130 under both mitotic and non-mitotic conditions. The interaction is critical for the correct targeting of both proteins to the cis-Golgi. Interacts with TMED2 and TMED3. In terms of processing, phosphorylated by CDC2/B1 and PLK kinases during mitosis. Phosphorylation cycle correlates with the cisternal stacking cycle. Phosphorylation of the homodimer prevents the association of dimers into higher-order oligomers, leading to cisternal unstacking. Target for caspase-3 cleavage during apoptosis. The cleavage contributes to Golgi fragmentation and occurs very early in the execution phase of apoptosis. Post-translationally, myristoylated.

The protein localises to the golgi apparatus. It is found in the cis-Golgi network membrane. Its subcellular location is the endoplasmic reticulum-Golgi intermediate compartment membrane. Functionally, key structural protein of the Golgi apparatus. The membrane cisternae of the Golgi apparatus adhere to each other to form stacks, which are aligned side by side to form the Golgi ribbon. Acting in concert with GORASP2/GRASP55, is required for the formation and maintenance of the Golgi ribbon, and may be dispensable for the formation of stacks. However, other studies suggest that GORASP1 plays an important role in assembly and membrane stacking of the cisternae, and in the reassembly of Golgi stacks after breakdown during mitosis. Caspase-mediated cleavage of GORASP1 is required for fragmentation of the Golgi during apoptosis. Also mediates, via its interaction with GOLGA2/GM130, the docking of transport vesicles with the Golgi membranes. Mediates ER stress-induced unconventional (ER/Golgi-independent) trafficking of core-glycosylated CFTR to cell membrane. This Homo sapiens (Human) protein is Golgi reassembly-stacking protein 1 (GORASP1).